The primary structure comprises 428 residues: S-adenosylmethionine synthase (428 aa).

Residue His-14 participates in ATP binding. Asp-16 provides a ligand contact to Mg(2+). Glu-42 contributes to the K(+) binding site. 2 residues coordinate L-methionine: Glu-55 and Gln-98. Residues 98 to 108 (QSGDINRGVER) form a flexible loop region. Residues 165–167 (DAK), 251–252 (KF), Asp-260, 266–267 (RK), Ala-283, and Lys-287 contribute to the ATP site. Asp-260 contributes to the L-methionine binding site. Lys-291 serves as a coordination point for L-methionine.

This sequence belongs to the AdoMet synthase family. In terms of assembly, homotetramer; dimer of dimers. Mg(2+) is required as a cofactor. K(+) serves as cofactor.

It is found in the cytoplasm. The enzyme catalyses L-methionine + ATP + H2O = S-adenosyl-L-methionine + phosphate + diphosphate. Its pathway is amino-acid biosynthesis; S-adenosyl-L-methionine biosynthesis; S-adenosyl-L-methionine from L-methionine: step 1/1. In terms of biological role, catalyzes the formation of S-adenosylmethionine (AdoMet) from methionine and ATP. The overall synthetic reaction is composed of two sequential steps, AdoMet formation and the subsequent tripolyphosphate hydrolysis which occurs prior to release of AdoMet from the enzyme. The protein is S-adenosylmethionine synthase of Parabacteroides distasonis (strain ATCC 8503 / DSM 20701 / CIP 104284 / JCM 5825 / NCTC 11152).